A 284-amino-acid chain; its full sequence is F-box protein PP2-B13 (284 aa).

Residues 1–44 (MMMLPEACVANILAFTSPADAFSSSEVSSVFRLAGDSDFVWEKF) enclose the F-box domain.

The sequence is that of F-box protein PP2-B13 (PP2B13) from Arabidopsis thaliana (Mouse-ear cress).